The primary structure comprises 1839 residues: Adenylate cyclase (1839 aa).

Disordered stretches follow at residues 1–21, 43–87, 126–245, 272–315, 332–388, and 400–468; these read MSSP…PQIE, ITTH…PRFS, TSLL…PIVS, KNTE…QWTA, KRKA…DSND, and ESSG…SFSK. The segment covering 165-211 has biased composition (polar residues); sequence SQSNESRGTRSSIFFPSTSNSRRGSATSTMTSGSRSSHPPDTPPITS. Positions 212–221 are enriched in low complexity; that stretch reads QQQEQQYDQQ. Residues 222–233 are compositionally biased toward basic and acidic residues; that stretch reads RQQRPETREQEQ. Basic residues predominate over residues 332-355; that stretch reads KRKAKHHHHYHHPQHPRPPHRKHY. Residues 361–376 show a composition bias toward basic and acidic residues; the sequence is PIEDKAVVEKEQEPPE. Low complexity predominate over residues 407 to 428; that stretch reads SASTQSVSSFSSGATGASGATG. The Ras-associating domain maps to 494–574; that stretch reads RRYAIRIFNI…LNGYLKSDPL (81 aa). LRR repeat units follow at residues 632-655, 659-679, 681-702, 704-726, 727-748, 750-771, 773-794, 795-816, 817-834, 835-856, 858-879, 882-903, 905-926, 928-950, 951-971, 982-1004, 1006-1027, 1028-1048, 1051-1073, 1074-1096, 1103-1124, and 1135-1160; these read TSDI…FIES, LSSL…VTDA, KLVS…IFKL, NLTI…SKLK, NLQL…INSC, NLLQ…INQL, KLAK…SQMK, NLRT…APNL, QNLF…DDLT, RLRT…GNYM, NMTS…LLSK, RLEK…INKL, RLIY…ISDL, SLKS…EDLE, LTSL…PAKF, SLLF…VNTF, NLKT…KLQN, LTEL…AVQH, SLKV…SQLS, RLSV…HYDW, DLKY…LDPE, and LKQL…SVSI. One can recognise a PPM-type phosphatase domain in the interval 1173–1439; it reads RYGVADTLGQ…DNITILCVSL (267 aa). Residues 1483-1620 form the Guanylate cyclase domain; sequence AIVFTDIKNS…PVVNKAARVS (138 aa). Residues Asp-1488 and Asp-1531 each contribute to the Mg(2+) site.

The protein belongs to the adenylyl cyclase class-3 family. Mg(2+) serves as cofactor.

It catalyses the reaction ATP = 3',5'-cyclic AMP + diphosphate. Its function is as follows. Plays essential roles in regulation of cellular metabolism by catalyzing the synthesis of a second messenger, cAMP. This Lachancea kluyveri (Yeast) protein is Adenylate cyclase (CYR1).